Here is a 385-residue protein sequence, read N- to C-terminus: Protein pelota homolog (385 aa).

K162 participates in a covalent cross-link: Glycyl lysine isopeptide (Lys-Gly) (interchain with G-Cter in SUMO2). Residues S374, S380, S381, and S382 each carry the phosphoserine modification.

It belongs to the eukaryotic release factor 1 family. Pelota subfamily. In terms of assembly, component of the Pelota-HBS1L complex, also named Dom34-Hbs1 complex, composed of PELO and HBS1L. Interacts with PINK1. Interacts with ABCE1. Interacts with CNOT4. A divalent metal cation is required as a cofactor. Ubiquitously expressed.

The protein resides in the cytoplasm. In terms of biological role, component of the Pelota-HBS1L complex, a complex that recognizes stalled ribosomes and triggers the No-Go Decay (NGD) pathway. In the Pelota-HBS1L complex, PELO recognizes ribosomes stalled at the 3' end of an mRNA and engages stalled ribosomes by destabilizing mRNA in the mRNA channel. Following mRNA extraction from stalled ribosomes by the SKI complex, the Pelota-HBS1L complex promotes recruitment of ABCE1, which drives the disassembly of stalled ribosomes, followed by degradation of damaged mRNAs as part of the NGD pathway. As part of the PINK1-regulated signaling, upon mitochondrial damage is recruited to the ribosome/mRNA-ribonucleoprotein complex associated to mitochondrial outer membrane thereby enabling the recruitment of autophagy receptors and induction of mitophagy. This Mus musculus (Mouse) protein is Protein pelota homolog.